Reading from the N-terminus, the 653-residue chain is MTANNPQNRYDYDVVVIGAGHAGTEAAAAAARLGAKTALLTTNLDTVGQMSCNPAIGGVAKGQIVREVDALGGLMGEAIDATGIQFRMLNRRKGPAMHSPRAQADKKAYQNFIKYRIETQDNLDLRQETVEDLITEPIADGQDRLANQRVIGVRVRGDAVYHAPTVILTTGTFLQAIMHTGKSQSAGGRAGEGTTAGLSGALKGMGFTLDRFKTGTPPRLNARTIDYSGLEEQPGDDDPQPFSYLNDAISSPQMACHIAHTNERVHDLIRANLDRAPMYSGQIDSRGPRYCPSIEDKVVRFADKSSHQLFLEPEGRQTCEVYVNGISTSLPRDVQDAMFRCIPGLEKAAIMRYGYAVEYDYCPPTQLWPHLESKSVSGLFFAGQINGTTGYEEAAGQGLIAGLNAARTAASKTPWVPSRQDAYIGVLVDDLVTSGTDEPYRMFTSRAEYRLLLRQDNADRRLTAQADELGLIDAARRERFHRKLAEIERGTELLQQAKFQPETGPTVRGDVYLRRPEVTWNVIAEQVPELAGIGREAAEQCSIDIKYAGYIDRQQAEVHKQSRHAEKSIPVSFDYDKIGPLRNEAKEKLTKVRPLNLGQAKRISGITPADLALVLAHLENNSLSQTKSSASVDKRASSDNESSRPTSSASDSL.

FAD-binding positions include 18–23, Val130, and Thr195; that span reads GAGHAG. Position 287–301 (287–301) interacts with NAD(+); that stretch reads GPRYCPSIEDKVVRF. Position 384 (Gln384) interacts with FAD. The interval 624–653 is disordered; sequence SQTKSSASVDKRASSDNESSRPTSSASDSL. A compositionally biased stretch (basic and acidic residues) spans 632-642; the sequence is VDKRASSDNES. Residues 643–653 are compositionally biased toward polar residues; it reads SRPTSSASDSL.

Belongs to the MnmG family. As to quaternary structure, homodimer. Heterotetramer of two MnmE and two MnmG subunits. It depends on FAD as a cofactor.

Its subcellular location is the cytoplasm. In terms of biological role, NAD-binding protein involved in the addition of a carboxymethylaminomethyl (cmnm) group at the wobble position (U34) of certain tRNAs, forming tRNA-cmnm(5)s(2)U34. This is tRNA uridine 5-carboxymethylaminomethyl modification enzyme MnmG from Rhodopirellula baltica (strain DSM 10527 / NCIMB 13988 / SH1).